The sequence spans 496 residues: Polyphosphate:AMP phosphotransferase (496 aa).

PPK2 stretches follow at residues 11–234 (IDKD…LQAA) and 269–495 (LDKD…YKKD).

It belongs to the polyphosphate kinase 2 (PPK2) family. Class II subfamily. Homodimer. Mg(2+) is required as a cofactor.

It catalyses the reaction [phosphate](n) + ADP = [phosphate](n+1) + AMP. Its function is as follows. Uses inorganic polyphosphate (polyP) as a donor to convert AMP to ADP. Can also convert GMP to GDP, with lower efficiency. Cannot dephosphorylate ADP in the presence of polyP. The chain is Polyphosphate:AMP phosphotransferase from Pseudomonas aeruginosa (strain ATCC 15692 / DSM 22644 / CIP 104116 / JCM 14847 / LMG 12228 / 1C / PRS 101 / PAO1).